A 430-amino-acid polypeptide reads, in one-letter code: Glutamate-1-semialdehyde 2,1-aminomutase (430 aa).

At Lys-265 the chain carries N6-(pyridoxal phosphate)lysine.

Belongs to the class-III pyridoxal-phosphate-dependent aminotransferase family. HemL subfamily. As to quaternary structure, homodimer. It depends on pyridoxal 5'-phosphate as a cofactor.

The protein localises to the cytoplasm. The catalysed reaction is (S)-4-amino-5-oxopentanoate = 5-aminolevulinate. It functions in the pathway porphyrin-containing compound metabolism; protoporphyrin-IX biosynthesis; 5-aminolevulinate from L-glutamyl-tRNA(Glu): step 2/2. The protein is Glutamate-1-semialdehyde 2,1-aminomutase of Shewanella baltica (strain OS155 / ATCC BAA-1091).